The chain runs to 122 residues: MIQPQTHLNVADNSGARELMCIRIIGASNRRYAHIGDVIVAVIKEAVPNMPLERSEVVRAVIVRTCKELKRDNGMIIRYDDNAAVVIDQEGNPKGTRIFGAIARELRELNFTKIVSLAPEVL.

The protein belongs to the universal ribosomal protein uL14 family. In terms of assembly, part of the 50S ribosomal subunit.

It is found in the plastid. The protein localises to the chloroplast. Its function is as follows. Binds to 23S rRNA. The protein is Large ribosomal subunit protein uL14c of Nicotiana sylvestris (Wood tobacco).